Consider the following 701-residue polypeptide: Glycine--tRNA ligase beta subunit (701 aa).

It belongs to the class-II aminoacyl-tRNA synthetase family. As to quaternary structure, tetramer of two alpha and two beta subunits.

It localises to the cytoplasm. It catalyses the reaction tRNA(Gly) + glycine + ATP = glycyl-tRNA(Gly) + AMP + diphosphate. The polypeptide is Glycine--tRNA ligase beta subunit (Nitratidesulfovibrio vulgaris (strain DSM 19637 / Miyazaki F) (Desulfovibrio vulgaris)).